The sequence spans 230 residues: Orotidine 5'-phosphate decarboxylase (230 aa).

Residues Asp-11, Lys-34, 61–70 (DLKLHDIPNT), Thr-117, Arg-179, Gln-188, Gly-208, and Arg-209 contribute to the substrate site. Lys-63 functions as the Proton donor in the catalytic mechanism.

Belongs to the OMP decarboxylase family. Type 1 subfamily. As to quaternary structure, homodimer.

The enzyme catalyses orotidine 5'-phosphate + H(+) = UMP + CO2. It functions in the pathway pyrimidine metabolism; UMP biosynthesis via de novo pathway; UMP from orotate: step 2/2. Functionally, catalyzes the decarboxylation of orotidine 5'-monophosphate (OMP) to uridine 5'-monophosphate (UMP). This is Orotidine 5'-phosphate decarboxylase from Streptococcus pyogenes serotype M28 (strain MGAS6180).